The primary structure comprises 60 residues: Large ribosomal subunit protein uL30 (60 aa).

Belongs to the universal ribosomal protein uL30 family. Part of the 50S ribosomal subunit.

The sequence is that of Large ribosomal subunit protein uL30 from Streptococcus pneumoniae (strain Hungary19A-6).